The following is a 331-amino-acid chain: 6-phosphogluconolactonase (331 aa).

The protein belongs to the cycloisomerase 2 family.

It carries out the reaction 6-phospho-D-glucono-1,5-lactone + H2O = 6-phospho-D-gluconate + H(+). Its pathway is carbohydrate degradation; pentose phosphate pathway; D-ribulose 5-phosphate from D-glucose 6-phosphate (oxidative stage): step 2/3. Its function is as follows. Catalyzes the hydrolysis of 6-phosphogluconolactone to 6-phosphogluconate. This chain is 6-phosphogluconolactonase, found in Citrobacter koseri (strain ATCC BAA-895 / CDC 4225-83 / SGSC4696).